The sequence spans 207 residues: Urease accessory protein UreG (207 aa).

12–19 (GPVGAGKT) lines the GTP pocket.

The protein belongs to the SIMIBI class G3E GTPase family. UreG subfamily. As to quaternary structure, homodimer. UreD, UreF and UreG form a complex that acts as a GTP-hydrolysis-dependent molecular chaperone, activating the urease apoprotein by helping to assemble the nickel containing metallocenter of UreC. The UreE protein probably delivers the nickel.

Its subcellular location is the cytoplasm. Its function is as follows. Facilitates the functional incorporation of the urease nickel metallocenter. This process requires GTP hydrolysis, probably effectuated by UreG. In Cereibacter sphaeroides (strain ATCC 17029 / ATH 2.4.9) (Rhodobacter sphaeroides), this protein is Urease accessory protein UreG.